The chain runs to 549 residues: Arginine-containing cyclodipeptide synthase amaA (549 aa).

The Conserved DDXXE motif motif lies at Asp445–Glu449.

This sequence belongs to the arginine-containing cyclodipeptide synthase family.

It carries out the reaction L-prolyl-tRNA(Pro) + L-arginyl-tRNA(Arg) = cyclo(L-arginyl-L-prolyl) + tRNA(Pro) + tRNA(Arg) + 2 H(+). The protein operates within secondary metabolite biosynthesis. Its function is as follows. Arginine-containing cyclodipeptide synthase; part of the cluster that mediates the biosynthesis of a highly modified cyclo-arginine-proline dipeptide (cRP). Within the pathway, amaA acts as the scaffold-generating enzyme and is responsible for formation of the cyclo-Arg-Pro diketopiperazine (cRW) from L-arginyl-tRNA(Arg) + L-prolyl-tRNA(Pro). Additional enzymes from the cluster then further modify the cyclo-Arg-Pro diketopiperazine (cRW) scaffold. This chain is Arginine-containing cyclodipeptide synthase amaA, found in Apiospora montagnei (Sphaeria apiospora).